The sequence spans 448 residues: Potassium/proton antiporter CemA (448 aa).

4 consecutive transmembrane segments (helical) span residues 47-67 (IVFYTNTGLNNCIFKIYLSLL), 213-233 (LSSLQYIGCLISIPSIISTLF), 314-334 (IISHSLTDIIYLITLSGLFVA), and 395-415 (IISCSVSTFPVVLDTVLKYLI).

Belongs to the CemA family.

It is found in the plastid membrane. The catalysed reaction is K(+)(in) + H(+)(out) = K(+)(out) + H(+)(in). Functionally, may be involved in proton extrusion. The sequence is that of Potassium/proton antiporter CemA from Aneura mirabilis (Parasitic liverwort).